A 341-amino-acid chain; its full sequence is L-amino acid-D/L-Glu epimerase (341 aa).

Substrate contacts are provided by residues Thr-132 and Lys-157 to Lys-159. Asp-186, Glu-212, and Asp-237 together coordinate Mg(2+). Substrate contacts are provided by residues Lys-261 and Asp-315–Asp-317.

It belongs to the mandelate racemase/muconate lactonizing enzyme family. Mg(2+) is required as a cofactor.

In terms of biological role, catalyzes the epimerization of dipeptides with L-Glu in the second position. Has epimerase activity with L-Gly-L-Glu, L-Ala-L-Glu, L-Ser-L-Glu, L-Pro-L-Glu, L-Val-L-Glu, L-Met-L-Glu, L-Thr-L-Glu and L-Phe-L-Glu (in vitro). The sequence is that of L-amino acid-D/L-Glu epimerase from Sulfurimonas denitrificans (strain ATCC 33889 / DSM 1251) (Thiomicrospira denitrificans (strain ATCC 33889 / DSM 1251)).